Here is a 435-residue protein sequence, read N- to C-terminus: Protein phosphatase 2C homolog 2 (435 aa).

One can recognise a PPM-type phosphatase domain in the interval 23–298; sequence IYGVSAMQGW…DNMTMIIIGL (276 aa). 4 residues coordinate Mn(2+): Asp-71, Gly-72, Asp-240, and Asp-289. Residues 366–435 form a disordered region; sequence DQTEEDRDLP…TSGAPEKSTS (70 aa). Basic and acidic residues predominate over residues 381-392; it reads ELPDSARNEREG. Residues 409-418 are compositionally biased toward low complexity; the sequence is GSSASTSEST. Over residues 419–435 the composition is skewed to polar residues; it reads VTPAGSSTSGAPEKSTS.

Belongs to the PP2C family. Mg(2+) is required as a cofactor. It depends on Mn(2+) as a cofactor.

Its subcellular location is the cytoplasm. The protein localises to the nucleus. The enzyme catalyses O-phospho-L-seryl-[protein] + H2O = L-seryl-[protein] + phosphate. It catalyses the reaction O-phospho-L-threonyl-[protein] + H2O = L-threonyl-[protein] + phosphate. In terms of biological role, dephosphorylating regulator for many key proteins. Dephosphorylates phosphoglycerate kinase pgk1 at least on 'Ser-203' to negatively regulate targeting of pgk1 to the mitochondrion, thereby negatively regulating production of acetyl-CoA and consequently aflatoxin biosynthesis. In Aspergillus flavus (strain ATCC 200026 / FGSC A1120 / IAM 13836 / NRRL 3357 / JCM 12722 / SRRC 167), this protein is Protein phosphatase 2C homolog 2.